A 534-amino-acid polypeptide reads, in one-letter code: Calcium uptake protein 1 homolog, mitochondrial (534 aa).

The N-terminal 32 residues, 1 to 32 (MLHCSFLRVIPIKNASKRLIIVRSLTSAPAKT), are a transit peptide targeting the mitochondrion. The segment at 131–150 (PEASQKEEVTESNGEVEEVK) is disordered. EF-hand domains are found at residues 271–306 (TSHADFALAFKIFDVDGNGALDKEEFTKVQQLIMSQ), 338–359 (KDGKGSLSSEKFIEFQERLQHD), and 466–501 (LSDHVVDVVITLFDDNLDGKLSHEEMVAVMRRRMRR). Ca(2+) contacts are provided by Asp-284, Asp-286, Asn-288, and Glu-295.

It belongs to the MICU1 family. MICU1 subfamily. As to expression, expressed at low levels in PLM touch receptor neurons, germ cells, epidermis, and muscles.

Its subcellular location is the mitochondrion intermembrane space. The protein resides in the mitochondrion inner membrane. In terms of biological role, calcium sensor of the mitochondrial calcium uniporter (mcu-1) channel, which senses calcium level via its EF-hand domains. At low calcium levels, micu-1 occludes the pore of the mcu-1 channel, preventing mitochondrial calcium uptake. At higher calcium levels, calcium-binding to micu-1 induces a conformational change that weakens mcu-1-micu-1 interactions and moves micu-1 away from the pore, allowing calcium permeation through the mcu-1 channel. Also required to protect against manganese toxicity by preventing manganese uptake by mcu-1. Modulates the activity of the mitochondrial calcium uniporter protein mcu-1 depending on the level of intracellular calcium in PLM touch receptor neurons following axonal injury. This is Calcium uptake protein 1 homolog, mitochondrial from Caenorhabditis elegans.